A 360-amino-acid chain; its full sequence is MTATLERRESASLWERFCTWITSTENRLYIGWFGVLMIPTLLTATSVFIIAFVAAPPVDIDGIREPVAGSLLYGNNIISGAIIPSSAAIGIHFYPIWEAASLDEWLYNGGPYQLIVLHFLLGVSCYIGREWELSYRLGMRPWISVAFTAPVAAAAAVFLVYPIGQGSFSDGMPLGISGTFNFMLVFQAEHNILMHPFHQLGVAGVFGGSLFSAMHGSLVTSSLIRETTENESANNGYKFGQEEETYNIVAAHGYFGRLIFQYASFNNSRSLHFFLGLWPVVGIWFTAMSVSTMAFNLNGFNFNQSVVDSQGRVINTWADILNRANLGMEVMHERNAHNFPLDLASSNSLPVSLVAPSVNG.

The next 3 helical transmembrane spans lie at Tyr29 to Ser46, His118 to Leu133, and Trp142 to Ala156. His118 is a binding site for chlorophyll a. Tyr126 provides a ligand contact to pheophytin a. Residues Asp170 and Glu189 each coordinate [CaMn4O5] cluster. The chain crosses the membrane as a helical span at residues Phe197 to Leu218. A chlorophyll a-binding site is contributed by His198. A quinone contacts are provided by residues His215 and Ser264–Phe265. His215 contributes to the Fe cation binding site. Residue His272 coordinates Fe cation. The helical transmembrane segment at Phe274–Met288 threads the bilayer. His332, Glu333, Asp342, and Ala344 together coordinate [CaMn4O5] cluster. Positions Ser345 to Gly360 are excised as a propeptide.

Belongs to the reaction center PufL/M/PsbA/D family. PSII is composed of 1 copy each of membrane proteins PsbA, PsbB, PsbC, PsbD, PsbE, PsbF, PsbH, PsbI, PsbJ, PsbK, PsbL, PsbM, PsbT, PsbX, PsbY, PsbZ, Psb30/Ycf12, at least 3 peripheral proteins of the oxygen-evolving complex and a large number of cofactors. It forms dimeric complexes. The D1/D2 heterodimer binds P680, chlorophylls that are the primary electron donor of PSII, and subsequent electron acceptors. It shares a non-heme iron and each subunit binds pheophytin, quinone, additional chlorophylls, carotenoids and lipids. D1 provides most of the ligands for the Mn4-Ca-O5 cluster of the oxygen-evolving complex (OEC). There is also a Cl(-1) ion associated with D1 and D2, which is required for oxygen evolution. The PSII complex binds additional chlorophylls, carotenoids and specific lipids. is required as a cofactor. In terms of processing, tyr-161 forms a radical intermediate that is referred to as redox-active TyrZ, YZ or Y-Z. C-terminally processed by CTPA; processing is essential to allow assembly of the oxygen-evolving complex and thus photosynthetic growth.

Its subcellular location is the plastid. The protein resides in the chloroplast thylakoid membrane. It catalyses the reaction 2 a plastoquinone + 4 hnu + 2 H2O = 2 a plastoquinol + O2. Its function is as follows. Photosystem II (PSII) is a light-driven water:plastoquinone oxidoreductase that uses light energy to abstract electrons from H(2)O, generating O(2) and a proton gradient subsequently used for ATP formation. It consists of a core antenna complex that captures photons, and an electron transfer chain that converts photonic excitation into a charge separation. The D1/D2 (PsbA/PsbD) reaction center heterodimer binds P680, the primary electron donor of PSII as well as several subsequent electron acceptors. This chain is Photosystem II protein D1, found in Gracilaria tenuistipitata var. liui (Red alga).